We begin with the raw amino-acid sequence, 286 residues long: MVGAAILESPGEGIGSNSILSQKRQLSSSDAAKRDAKKRSTMLMDLEILDCPICYEAFTIPIFQCDNGHLACSSCCPKLNNKCPACTSPVGHNRCRAMESVLESILIPCPNAKLGCKKNVSYGKELTHEKECMFSHCACPALDCNYTSSYKDLYTHYRITHMEINQINTFICDIPLSVRMNISKKILIRTEHLTNHLFAVQCFREPYGVYVTVSCIAPSSPELSQYSYALSYTVDGHTVIYQSPEVKRVLKLSFQTPQENFMLIPNSLLRGDVLEMRISVKKLNKE.

Residues 51 to 87 form an RING-type zinc finger; the sequence is CPICYEAFTIPIFQCDNGHLACSSCCPKLNNKCPACT. The segment at 101–285 is SBD; it reads VLESILIPCP…MRISVKKLNK (185 aa). Residues 104–162 form an SIAH-type zinc finger; sequence SILIPCPNAKLGCKKNVSYGKELTHEKECMFSHCACPALDCNYTSSYKDLYTHYRITHM. Zn(2+) contacts are provided by Cys-109, Cys-116, His-128, Cys-132, Cys-139, Cys-144, His-156, and His-161.

Belongs to the SINA (Seven in absentia) family.

The catalysed reaction is S-ubiquitinyl-[E2 ubiquitin-conjugating enzyme]-L-cysteine + [acceptor protein]-L-lysine = [E2 ubiquitin-conjugating enzyme]-L-cysteine + N(6)-ubiquitinyl-[acceptor protein]-L-lysine.. Its pathway is protein modification; protein ubiquitination. Functionally, E3 ubiquitin-protein ligase that mediates ubiquitination and subsequent proteasomal degradation of target proteins. E3 ubiquitin ligases accept ubiquitin from an E2 ubiquitin-conjugating enzyme in the form of a thioester and then directly transfers the ubiquitin to targeted substrates. It probably triggers the ubiquitin-mediated degradation of different substrates. The sequence is that of E3 ubiquitin-protein ligase SINA-like 7 from Arabidopsis thaliana (Mouse-ear cress).